The chain runs to 362 residues: 3-isopropylmalate dehydrogenase (362 aa).

78-91 (GPKWETLPPDEQPE) serves as a coordination point for NAD(+). The substrate site is built by Arg-99, Arg-109, Arg-138, and Asp-227. Mg(2+)-binding residues include Asp-227, Asp-251, and Asp-255. 285 to 297 (GSAPDIAGQGIAN) serves as a coordination point for NAD(+).

This sequence belongs to the isocitrate and isopropylmalate dehydrogenases family. LeuB type 1 subfamily. In terms of assembly, homodimer. The cofactor is Mg(2+). Mn(2+) serves as cofactor.

Its subcellular location is the cytoplasm. The catalysed reaction is (2R,3S)-3-isopropylmalate + NAD(+) = 4-methyl-2-oxopentanoate + CO2 + NADH. It functions in the pathway amino-acid biosynthesis; L-leucine biosynthesis; L-leucine from 3-methyl-2-oxobutanoate: step 3/4. Catalyzes the oxidation of 3-carboxy-2-hydroxy-4-methylpentanoate (3-isopropylmalate) to 3-carboxy-4-methyl-2-oxopentanoate. The product decarboxylates to 4-methyl-2 oxopentanoate. In Geobacter metallireducens (strain ATCC 53774 / DSM 7210 / GS-15), this protein is 3-isopropylmalate dehydrogenase.